A 311-amino-acid chain; its full sequence is Forkhead box protein R2 (311 aa).

Disordered regions lie at residues 56–76 (PPEM…PCEP) and 90–171 (LGSQ…QSPE). Residues 115–128 (QKDEGSNCSEDKVV) show a composition bias toward basic and acidic residues. Positions 129–143 (ESLPSSSSEQSPLQK) are enriched in low complexity. A compositionally biased stretch (acidic residues) spans 153-164 (ELTEEEAEEPDD). Positions 192–294 (RPPLNCSHLI…RVLAFAQRER (103 aa)) form a DNA-binding region, fork-head.

As to expression, expressed in breast cancer cell lines and primary cancer.

The protein resides in the nucleus. The sequence is that of Forkhead box protein R2 (FOXR2) from Homo sapiens (Human).